A 143-amino-acid polypeptide reads, in one-letter code: Aspartate 1-decarboxylase (143 aa).

Catalysis depends on S25, which acts as the Schiff-base intermediate with substrate; via pyruvic acid. The residue at position 25 (S25) is a Pyruvic acid (Ser). T57 provides a ligand contact to substrate. Catalysis depends on Y58, which acts as the Proton donor. 73-75 (GAA) contributes to the substrate binding site.

This sequence belongs to the PanD family. As to quaternary structure, heterooctamer of four alpha and four beta subunits. Requires pyruvate as cofactor. In terms of processing, is synthesized initially as an inactive proenzyme, which is activated by self-cleavage at a specific serine bond to produce a beta-subunit with a hydroxyl group at its C-terminus and an alpha-subunit with a pyruvoyl group at its N-terminus.

It localises to the cytoplasm. It catalyses the reaction L-aspartate + H(+) = beta-alanine + CO2. It participates in cofactor biosynthesis; (R)-pantothenate biosynthesis; beta-alanine from L-aspartate: step 1/1. In terms of biological role, catalyzes the pyruvoyl-dependent decarboxylation of aspartate to produce beta-alanine. The polypeptide is Aspartate 1-decarboxylase (Mycobacterium ulcerans (strain Agy99)).